We begin with the raw amino-acid sequence, 123 residues long: Large ribosomal subunit protein uL29 (123 aa).

It belongs to the universal ribosomal protein uL29 family. Component of the large ribosomal subunit.

The protein resides in the cytoplasm. In terms of biological role, component of the large ribosomal subunit. The ribosome is a large ribonucleoprotein complex responsible for the synthesis of proteins in the cell. This is Large ribosomal subunit protein uL29 (rpl35) from Xenopus tropicalis (Western clawed frog).